A 127-amino-acid polypeptide reads, in one-letter code: Small ribosomal subunit protein uS11 (127 aa).

The protein belongs to the universal ribosomal protein uS11 family. Part of the 30S ribosomal subunit. Interacts with proteins S7 and S18. Binds to IF-3.

In terms of biological role, located on the platform of the 30S subunit, it bridges several disparate RNA helices of the 16S rRNA. Forms part of the Shine-Dalgarno cleft in the 70S ribosome. This is Small ribosomal subunit protein uS11 from Streptococcus pyogenes serotype M1.